Here is a 322-residue protein sequence, read N- to C-terminus: Arginase-1 (322 aa).

Lys17 carries the post-translational modification N6-succinyllysine. A phosphoserine mark is found at Ser62 and Ser72. Residue Lys75 is modified to N6-succinyllysine. Mn(2+)-binding residues include His101, Asp124, His126, and Asp128. Residues 126–130 and 137–139 contribute to the substrate site; these read HTDIN and SGN. The residue at position 163 (Ser163) is a Phosphoserine. Asp183 lines the substrate pocket. Phosphoserine is present on Ser217. 2 residues coordinate Mn(2+): Asp232 and Asp234. Substrate-binding residues include Thr246 and Glu277.

Belongs to the arginase family. Homotrimer. Interacts with CMTM6. Mn(2+) serves as cofactor. In terms of tissue distribution, within the immune system initially reported to be selectively expressed in granulocytes (polymorphonuclear leukocytes [PMNs]). Also detected in macrophages mycobacterial granulomas. Expressed in group2 innate lymphoid cells (ILC2s) during lung disease.

It localises to the cytoplasm. It is found in the cytoplasmic granule. The catalysed reaction is L-arginine + H2O = urea + L-ornithine. The protein operates within nitrogen metabolism; urea cycle; L-ornithine and urea from L-arginine: step 1/1. In terms of biological role, key element of the urea cycle converting L-arginine to urea and L-ornithine, which is further metabolized into metabolites proline and polyamides that drive collagen synthesis and bioenergetic pathways critical for cell proliferation, respectively; the urea cycle takes place primarily in the liver and, to a lesser extent, in the kidneys. Functionally, functions in L-arginine homeostasis in nonhepatic tissues characterized by the competition between nitric oxide synthase (NOS) and arginase for the available intracellular substrate arginine. Arginine metabolism is a critical regulator of innate and adaptive immune responses. Involved in an antimicrobial effector pathway in polymorphonuclear granulocytes (PMN). Upon PMN cell death is liberated from the phagolysosome and depletes arginine in the microenvironment leading to suppressed T cell and natural killer (NK) cell proliferation and cytokine secretion. In group 2 innate lymphoid cells (ILC2s) promotes acute type 2 inflammation in the lung and is involved in optimal ILC2 proliferation but not survival. In humans, the immunological role in the monocytic/macrophage/dendritic cell (DC) lineage is unsure. This is Arginase-1 (ARG1) from Homo sapiens (Human).